Consider the following 146-residue polypeptide: ATP synthase epsilon chain 2 (146 aa).

Belongs to the ATPase epsilon chain family. F-type ATPases have 2 components, CF(1) - the catalytic core - and CF(0) - the membrane proton channel. CF(1) has five subunits: alpha(3), beta(3), gamma(1), delta(1), epsilon(1). CF(0) has three main subunits: a, b and c.

The protein localises to the cell inner membrane. Functionally, produces ATP from ADP in the presence of a proton gradient across the membrane. This Cereibacter sphaeroides (strain ATCC 17023 / DSM 158 / JCM 6121 / CCUG 31486 / LMG 2827 / NBRC 12203 / NCIMB 8253 / ATH 2.4.1.) (Rhodobacter sphaeroides) protein is ATP synthase epsilon chain 2.